Reading from the N-terminus, the 375-residue chain is Sperm microtubule associated protein 2 (375 aa).

Residues 1–78 (MGELGEHRAS…MAGEELPETS (78 aa)) form a disordered region. The segment covering 59-75 (EPEEEIPPEEMAGEELP) has biased composition (acidic residues). THEG repeat units follow at residues 110–129 (AKGR…PKTN), 176–195 (TITV…PKRF), 214–233 (STLE…PKVR), 250–269 (AAQM…PRPP), 282–301 (PKPY…PKAL), 318–337 (VTKN…PKIR), and 352–371 (ASLV…PKYI). S287 bears the Phosphoserine mark.

As to quaternary structure, interacts with CCT5. In terms of tissue distribution, testis specific (at protein level). Specifically expressed in spermatids; Sertoli cells maintain the level of expression in spermatids. If isolated spermatids are cultivated for 16 hours alone, the expression of THEG is down-regulated. May require signals from Sertoli cells to initiate changes in its gene expression through spermatogenesis.

It is found in the nucleus. In terms of biological role, may be involved (but not essential) in spermatogenesis. This is Sperm microtubule associated protein 2 from Mus musculus (Mouse).